The sequence spans 308 residues: uncharacterized protein (308 aa).

Positions 212 to 242 (EADKMTIDYMRELDNLQRQYDGLVDEDKALH) form a coiled coil.

This is an uncharacterized protein from Ostreid herpesvirus 1 (isolate France) (OsHV-1).